Here is a 276-residue protein sequence, read N- to C-terminus: Tryptophan synthase alpha chain (276 aa).

Catalysis depends on proton acceptor residues E49 and D60.

Belongs to the TrpA family. As to quaternary structure, tetramer of two alpha and two beta chains.

The catalysed reaction is (1S,2R)-1-C-(indol-3-yl)glycerol 3-phosphate + L-serine = D-glyceraldehyde 3-phosphate + L-tryptophan + H2O. It functions in the pathway amino-acid biosynthesis; L-tryptophan biosynthesis; L-tryptophan from chorismate: step 5/5. Functionally, the alpha subunit is responsible for the aldol cleavage of indoleglycerol phosphate to indole and glyceraldehyde 3-phosphate. This Corynebacterium aurimucosum (strain ATCC 700975 / DSM 44827 / CIP 107346 / CN-1) (Corynebacterium nigricans) protein is Tryptophan synthase alpha chain.